The primary structure comprises 469 residues: tRNA modification GTPase MnmE (469 aa).

3 residues coordinate (6S)-5-formyl-5,6,7,8-tetrahydrofolate: Arg38, Glu95, and Arg134. Residues 230 to 392 form the TrmE-type G domain; it reads GIRVALVGPP…LRRGLAALVD (163 aa). GTP is bound by residues 240 to 245, 259 to 265, and 284 to 287; these read NAGKSS, SAQAGTT, and DTAG. 2 residues coordinate Mg(2+): Ser244 and Thr265. Lys468 serves as a coordination point for (6S)-5-formyl-5,6,7,8-tetrahydrofolate.

The protein belongs to the TRAFAC class TrmE-Era-EngA-EngB-Septin-like GTPase superfamily. TrmE GTPase family. Homodimer. Heterotetramer of two MnmE and two MnmG subunits. K(+) is required as a cofactor.

It is found in the cytoplasm. Its function is as follows. Exhibits a very high intrinsic GTPase hydrolysis rate. Involved in the addition of a carboxymethylaminomethyl (cmnm) group at the wobble position (U34) of certain tRNAs, forming tRNA-cmnm(5)s(2)U34. This is tRNA modification GTPase MnmE from Halorhodospira halophila (strain DSM 244 / SL1) (Ectothiorhodospira halophila (strain DSM 244 / SL1)).